The following is a 740-amino-acid chain: Dynein regulatory complex protein 1 (740 aa).

Residues 56 to 75 (GEYLDGKKESEEDQSKSYKQ) form a disordered region. The stretch at 101-387 (IDIREIHRRV…LQFKELQKAM (287 aa)) forms a coiled coil. A disordered region spans residues 573-620 (EKASMEETSMGSELELAEQTEMEGAKEESLVEGEKEEEEETPPSPWDI). The span at 595–605 (EGAKEESLVEG) shows a compositional bias: basic and acidic residues. Positions 691-724 (LTQRAKLLLENSSLEQRNTELQALLQQYLNSKIN) form a coiled coil.

It belongs to the DRC1 family. In terms of assembly, component of the nexin-dynein regulatory complex (N-DRC). Interacts with CCDC65/DRC2, DRC3, GAS8/DRC4 and TCTE1/DRC5.

The protein resides in the cytoplasm. It localises to the cytoskeleton. Its subcellular location is the cilium axoneme. It is found in the flagellum axoneme. Component of the nexin-dynein regulatory complex (N-DRC) a key regulator of ciliary/flagellar motility which maintains the alignment and integrity of the distal axoneme and regulates microtubule sliding in motile axonemes. Plays a critical role in the assembly of N-DRC and also stabilizes the assembly of multiple inner dynein arms and radial spokes. Coassembles with CCDC65/DRC2 to form a central scaffold needed for assembly of the N-DRC and its attachment to the outer doublet microtubules. The sequence is that of Dynein regulatory complex protein 1 (DRC1) from Macaca fascicularis (Crab-eating macaque).